We begin with the raw amino-acid sequence, 475 residues long: Aspartyl/glutamyl-tRNA(Asn/Gln) amidotransferase subunit B (475 aa).

It belongs to the GatB/GatE family. GatB subfamily. As to quaternary structure, heterotrimer of A, B and C subunits.

It carries out the reaction L-glutamyl-tRNA(Gln) + L-glutamine + ATP + H2O = L-glutaminyl-tRNA(Gln) + L-glutamate + ADP + phosphate + H(+). The enzyme catalyses L-aspartyl-tRNA(Asn) + L-glutamine + ATP + H2O = L-asparaginyl-tRNA(Asn) + L-glutamate + ADP + phosphate + 2 H(+). Its function is as follows. Allows the formation of correctly charged Asn-tRNA(Asn) or Gln-tRNA(Gln) through the transamidation of misacylated Asp-tRNA(Asn) or Glu-tRNA(Gln) in organisms which lack either or both of asparaginyl-tRNA or glutaminyl-tRNA synthetases. The reaction takes place in the presence of glutamine and ATP through an activated phospho-Asp-tRNA(Asn) or phospho-Glu-tRNA(Gln). This chain is Aspartyl/glutamyl-tRNA(Asn/Gln) amidotransferase subunit B, found in Bacillus mycoides (strain KBAB4) (Bacillus weihenstephanensis).